The chain runs to 511 residues: Chromosomal replication initiator protein DnaA (511 aa).

The tract at residues 1-90 (MSVELWQQCV…KRSSAPRAAP (90 aa)) is domain I, interacts with DnaA modulators. Positions 91-174 (NAPLAAAASQ…QVEGALKHTS (84 aa)) are domain II. Residues 133-162 (VAAHDEPSRDSFDPMAGASSQQAPARAEQR) form a disordered region. Basic and acidic residues predominate over residues 135 to 144 (AHDEPSRDSF). The tract at residues 175-391 (YLNRTFTFEN…GALKRVIAHS (217 aa)) is domain III, AAA+ region. Residues G219, G221, K222, and T223 each coordinate ATP. Positions 392–511 (HFMGRDITIE…YKNLLRTLTT (120 aa)) are domain IV, binds dsDNA.

The protein belongs to the DnaA family. In terms of assembly, oligomerizes as a right-handed, spiral filament on DNA at oriC.

Its subcellular location is the cytoplasm. Plays an essential role in the initiation and regulation of chromosomal replication. ATP-DnaA binds to the origin of replication (oriC) to initiate formation of the DNA replication initiation complex once per cell cycle. Binds the DnaA box (a 9 base pair repeat at the origin) and separates the double-stranded (ds)DNA. Forms a right-handed helical filament on oriC DNA; dsDNA binds to the exterior of the filament while single-stranded (ss)DNA is stabiized in the filament's interior. The ATP-DnaA-oriC complex binds and stabilizes one strand of the AT-rich DNA unwinding element (DUE), permitting loading of DNA polymerase. After initiation quickly degrades to an ADP-DnaA complex that is not apt for DNA replication. Binds acidic phospholipids. The polypeptide is Chromosomal replication initiator protein DnaA (Pseudomonas savastanoi pv. phaseolicola (strain 1448A / Race 6) (Pseudomonas syringae pv. phaseolicola (strain 1448A / Race 6))).